We begin with the raw amino-acid sequence, 211 residues long: Riboflavin kinase (211 aa).

The H-T-H motif-like stretch occupies residues 1-85 (MKKILMLIEL…CDKISNALSK (85 aa)). Residues 86–211 (GVIVGEVVSG…GDRVRLEVIQ (126 aa)) are riboflavin kinase. 95-100 (GLGEGA) contributes to the CDP binding site. Positions 122 and 124 each coordinate Mg(2+). FMN-binding residues include T178 and E186. 191–194 (VNLR) provides a ligand contact to CDP.

The protein belongs to the archaeal riboflavin kinase family. Mg(2+) is required as a cofactor.

The catalysed reaction is riboflavin + CTP = CDP + FMN + H(+). It functions in the pathway cofactor biosynthesis; FMN biosynthesis; FMN from riboflavin (CTP route): step 1/1. Its function is as follows. Catalyzes the CTP-dependent phosphorylation of riboflavin (vitamin B2) to form flavin mononucleotide (FMN). In Thermococcus kodakarensis (strain ATCC BAA-918 / JCM 12380 / KOD1) (Pyrococcus kodakaraensis (strain KOD1)), this protein is Riboflavin kinase (ribK).